We begin with the raw amino-acid sequence, 129 residues long: Small ribosomal subunit protein uS11 (129 aa).

The protein belongs to the universal ribosomal protein uS11 family. In terms of assembly, part of the 30S ribosomal subunit. Interacts with proteins S7 and S18. Binds to IF-3.

Functionally, located on the platform of the 30S subunit, it bridges several disparate RNA helices of the 16S rRNA. Forms part of the Shine-Dalgarno cleft in the 70S ribosome. The protein is Small ribosomal subunit protein uS11 of Francisella tularensis subsp. holarctica (strain FTNF002-00 / FTA).